The chain runs to 414 residues: eIF5-mimic protein 1 (414 aa).

A disordered region spans residues 1–22 (MNKNQKPVLTGQRFKTRKRDEK). The W2 domain occupies 248–414 (VQQSLGTRKE…LQNAEEEFRI (167 aa)).

The protein belongs to the BZW family.

The protein localises to the cytoplasm. Its function is as follows. Translation initiation regulator which may repress non-AUG initiated translation and repeat-associated non-AUG (RAN) initiated translation by acting as a competitive inhibitor of eukaryotic translation initiation factor 5 (EIF5) function. The polypeptide is eIF5-mimic protein 1 (BZW2) (Gallus gallus (Chicken)).